The following is a 1060-amino-acid chain: Protocadherin-1 (1060 aa).

Residues 1–57 (MDSGAGGRRCPEAALLILGPPRMEHLRHSPGPGGQRLLLPSMLLALLLLLAPSPGHA) form the signal peptide. 7 Cadherin domains span residues 58–168 (TRVV…TPNF), 169–280 (ASPV…APKF), 281–387 (ERPS…APTI), 396–506 (THQD…APVF), 507–612 (TQSV…DPKF), 613–715 (MLSG…APYI), and 718–844 (PSNT…DPEY). The Extracellular portion of the chain corresponds to 58 to 852 (TRVVYKVPEE…EYERSKQRGN (795 aa)). Residues asparagine 305 and asparagine 403 are each glycosylated (N-linked (GlcNAc...) asparagine). Asparagine 618, asparagine 662, asparagine 813, and asparagine 818 each carry an N-linked (GlcNAc...) asparagine glycan. A helical membrane pass occupies residues 853-873 (ILFGVVAGVVAVALLIALAVL). Over 874 to 1060 (VRYCRQREAK…HGAIWTEVWE (187 aa)) the chain is Cytoplasmic. Positions 884-897 (SGYQAGKKETKDLY) are enriched in basic and acidic residues. The tract at residues 884 to 1045 (SGYQAGKKET…QPFQLSTPQP (162 aa)) is disordered. Residues 907–920 (KGNKSKGKKSKSPK) are compositionally biased toward basic residues. A phosphoserine mark is found at serine 918, serine 949, serine 962, and serine 984. Low complexity predominate over residues 973-986 (SPLPSIQLQPQSPS). Composition is skewed to polar residues over residues 1003-1024 (FVGT…SYRT) and 1033-1043 (QVGQPFQLSTP).

In terms of tissue distribution, highly expressed in the brain and neuro-glial cells.

The protein localises to the cell junction. The protein resides in the cell membrane. May be involved in cell-cell interaction processes and in cell adhesion. This is Protocadherin-1 (PCDH1) from Homo sapiens (Human).